A 956-amino-acid chain; its full sequence is Kinesin heavy chain isoform 5C (956 aa).

Residues 8–327 enclose the Kinesin motor domain; it reads SIKVMCRFRP…LMFGQRAKTI (320 aa). The ATP site is built by Q87, S89, S90, G91, K92, T93, H94, and K99. The segment at 174 to 315 is microtubule-binding; it reads VSSPEEVMDV…PSVFNEAETK (142 aa). T403 carries the phosphothreonine modification. The stretch at 406-923 forms a coiled coil; that stretch reads VDGISAEKEK…RRAHSAQIAK (518 aa). A globular region spans residues 859 to 956; the sequence is CELPKLEKRL…GSSNSTHYQK (98 aa). Positions 910–956 are disordered; the sequence is KNMARRAHSAQIAKPIRPGHYPASSPTAVHAVRGGGGGSSNSTHYQK.

It belongs to the TRAFAC class myosin-kinesin ATPase superfamily. Kinesin family. Kinesin subfamily. As to quaternary structure, oligomer composed of two heavy chains and two light chains. Interacts with GRIP1. Interacts with KLC3 and TRAK1. Interacts with ZFYVE27.

Its subcellular location is the cytoplasm. It is found in the cytoskeleton. The protein localises to the cell projection. It localises to the dendrite. The catalysed reaction is ATP + H2O = ADP + phosphate + H(+). Its function is as follows. Microtubule-associated force-producing protein that may play a role in organelle transport. Has ATPase activity. Involved in synaptic transmission. Mediates dendritic trafficking of mRNAs. Required for anterograde axonal transportation of MAPK8IP3/JIP3 which is essential for MAPK8IP3/JIP3 function in axon elongation. The chain is Kinesin heavy chain isoform 5C (Kif5c) from Mus musculus (Mouse).